We begin with the raw amino-acid sequence, 269 residues long: MSEIGFKYSILASGSSGNSFYLETSKKKLLVDAGLSGKKITSLLAEINRKPEDLDAILITHEHSDHIHGVGVLARKYGMDLYANEKTWQAMENSKYLGKVDSSQKHIFEMGKTKTFGDIDIESFGVSHDAVAPQFYRFMKDDKSFVLLTDTGYVSDRMAGIVENADGYLIEANHDVEILRSGSYAWRLKQRILSDLGHLSNEDGAEAMIRTLGNRTKKIYLGHLSKENNIKELAHMTMVNQLAQADLGVGVDFKVYDTSPDTATPLTEI.

A divalent metal cation-binding residues include His61, His63, Asp65, His66, and Asp150.

This sequence belongs to the metallo-beta-lactamase superfamily. Fe(2+) serves as cofactor. Requires Zn(2+) as cofactor. It depends on Mn(2+) as a cofactor.

It localises to the cell membrane. Functionally, 5'-&gt;3' double-stranded DNA exonuclease. May be involved in the WalK/WalR signal transduction pathway. Required for accurate coordination of cell division with DNA replication. May play a role in cell wall metabolism. The sequence is that of Exodeoxyribonuclease WalJ from Streptococcus pneumoniae serotype 2 (strain D39 / NCTC 7466).